The primary structure comprises 205 residues: LexA repressor (205 aa).

A DNA-binding region (H-T-H motif) is located at residues 28–48 (RAEIAHKLGFRSANSAEEHLK). Active-site for autocatalytic cleavage activity residues include Ser122 and Lys159.

It belongs to the peptidase S24 family. As to quaternary structure, homodimer.

It catalyses the reaction Hydrolysis of Ala-|-Gly bond in repressor LexA.. Functionally, represses a number of genes involved in the response to DNA damage (SOS response), including recA and lexA. In the presence of single-stranded DNA, RecA interacts with LexA causing an autocatalytic cleavage which disrupts the DNA-binding part of LexA, leading to derepression of the SOS regulon and eventually DNA repair. The sequence is that of LexA repressor from Idiomarina loihiensis (strain ATCC BAA-735 / DSM 15497 / L2-TR).